We begin with the raw amino-acid sequence, 61 residues long: Short neurotoxin 2 (61 aa).

4 cysteine pairs are disulfide-bonded: Cys-3-Cys-23, Cys-17-Cys-40, Cys-42-Cys-53, and Cys-54-Cys-59.

The protein belongs to the three-finger toxin family. Short-chain subfamily. Type I alpha-neurotoxin sub-subfamily. In terms of tissue distribution, expressed by the venom gland.

It localises to the secreted. Binds to muscle nicotinic acetylcholine receptor (nAChR) and inhibit acetylcholine from binding to the receptor, thereby impairing neuromuscular transmission. In Naja nivea (Cape cobra), this protein is Short neurotoxin 2.